A 141-amino-acid polypeptide reads, in one-letter code: Protein nfe1 (141 aa).

To the N-terminal of nitrogenase iron protein (NifH). Has lost the ATP-binding site.

Functionally, responsible for the nodulation efficiency and competitive ability of strain GR4 on alfalfa roots. The protein is Protein nfe1 (nfe1) of Rhizobium meliloti (Ensifer meliloti).